The primary structure comprises 323 residues: Type II restriction enzyme BsoBI (323 aa).

Mg(2+)-binding residues include D212, E240, and K242.

As to quaternary structure, homodimer.

The enzyme catalyses Endonucleolytic cleavage of DNA to give specific double-stranded fragments with terminal 5'-phosphates.. Functionally, a P subtype restriction enzyme that recognizes the double-stranded sequence 5'-CYCGRG-3' and cleaves after C-1. This chain is Type II restriction enzyme BsoBI, found in Geobacillus stearothermophilus (Bacillus stearothermophilus).